The primary structure comprises 426 residues: Serine--tRNA ligase (426 aa).

233–235 lines the L-serine pocket; sequence TAE. 264-266 contributes to the ATP binding site; the sequence is RSE. Glu-287 contacts L-serine. Residue 351-354 participates in ATP binding; that stretch reads EISS. Residue Ser-387 participates in L-serine binding.

It belongs to the class-II aminoacyl-tRNA synthetase family. Type-1 seryl-tRNA synthetase subfamily. Homodimer. The tRNA molecule binds across the dimer.

It is found in the cytoplasm. It carries out the reaction tRNA(Ser) + L-serine + ATP = L-seryl-tRNA(Ser) + AMP + diphosphate + H(+). The catalysed reaction is tRNA(Sec) + L-serine + ATP = L-seryl-tRNA(Sec) + AMP + diphosphate + H(+). The protein operates within aminoacyl-tRNA biosynthesis; selenocysteinyl-tRNA(Sec) biosynthesis; L-seryl-tRNA(Sec) from L-serine and tRNA(Sec): step 1/1. Functionally, catalyzes the attachment of serine to tRNA(Ser). Is also able to aminoacylate tRNA(Sec) with serine, to form the misacylated tRNA L-seryl-tRNA(Sec), which will be further converted into selenocysteinyl-tRNA(Sec). The protein is Serine--tRNA ligase of Clostridium botulinum (strain 657 / Type Ba4).